The primary structure comprises 485 residues: MTQWIAGQWVAGQGDAMTSVSPYNNEVVWQGDSATPAQVESAVAAARDAFLVWKKLSFAEREAIVLNFAEKVKENSEEIAQIIAKETGKPIWETRTEAGAMAGKIAISIRAYHERTGEASREAAGNQIVLRHRPLGVMAVFGPYNFPGHLPNGHIVPALLSGNTVVFKPSEQTPWTGEFAMKLWQEAGLPAGVINLVQGAKETGIALADAKGLDGVLFTGSANTGHILHRQFAGQPGKMLALEMGGNNPMVISDQFGDADATVYTIIQSAFISAGQRCTCARRLYVPVGEKGDQLLDKLVAATLKIRVDQPFAEPAPFMGPQISEAAAKFILDAQANLQSLGGVSLVEAKAGEAAFVSPGIIDATNIAELPDEEYFGPLLQVVRYQSLEQAVELANDTRFGLSAGLVSTDDSEWEYFVDHIRAGIVNRNRQLTGASGDAPFGGPGASGNLRPSAYYAADYCAYPMASMEGGETQLPATFSPGIEL.

An NAD(+)-binding site is contributed by 220–225; that stretch reads GSANTG. Catalysis depends on residues Glu243 and Cys278.

This sequence belongs to the aldehyde dehydrogenase family. AstD subfamily.

It catalyses the reaction N-succinyl-L-glutamate 5-semialdehyde + NAD(+) + H2O = N-succinyl-L-glutamate + NADH + 2 H(+). The protein operates within amino-acid degradation; L-arginine degradation via AST pathway; L-glutamate and succinate from L-arginine: step 4/5. Functionally, catalyzes the NAD-dependent reduction of succinylglutamate semialdehyde into succinylglutamate. This Vibrio atlanticus (strain LGP32) (Vibrio splendidus (strain Mel32)) protein is N-succinylglutamate 5-semialdehyde dehydrogenase.